We begin with the raw amino-acid sequence, 36 residues long: Photosystem I reaction center subunit VIII (36 aa).

A helical transmembrane segment spans residues 9-29; it reads IFVPLVGLVFPAVAMASLFLY.

It belongs to the PsaI family.

It is found in the plastid. The protein resides in the chloroplast thylakoid membrane. In terms of biological role, may help in the organization of the PsaL subunit. The polypeptide is Photosystem I reaction center subunit VIII (Ostreococcus tauri).